Reading from the N-terminus, the 230-residue chain is UPF0702 transmembrane protein YcaP (230 aa).

The next 3 membrane-spanning stretches (helical) occupy residues 16-36 (FDFL…VFLF), 48-68 (MSLF…DVAF), and 75-95 (VPVL…MWLM).

It belongs to the UPF0702 family.

It is found in the cell membrane. The polypeptide is UPF0702 transmembrane protein YcaP (ycaP) (Escherichia coli (strain K12)).